Reading from the N-terminus, the 111-residue chain is Ribosome-binding factor A (111 aa).

The protein belongs to the RbfA family. As to quaternary structure, monomer. Binds 30S ribosomal subunits, but not 50S ribosomal subunits or 70S ribosomes.

The protein resides in the cytoplasm. One of several proteins that assist in the late maturation steps of the functional core of the 30S ribosomal subunit. Associates with free 30S ribosomal subunits (but not with 30S subunits that are part of 70S ribosomes or polysomes). Required for efficient processing of 16S rRNA. May interact with the 5'-terminal helix region of 16S rRNA. This chain is Ribosome-binding factor A, found in Helicobacter pylori (strain ATCC 700392 / 26695) (Campylobacter pylori).